The following is a 105-amino-acid chain: Large ribosomal subunit protein uL24 (105 aa).

This sequence belongs to the universal ribosomal protein uL24 family. As to quaternary structure, part of the 50S ribosomal subunit.

Functionally, one of two assembly initiator proteins, it binds directly to the 5'-end of the 23S rRNA, where it nucleates assembly of the 50S subunit. Its function is as follows. One of the proteins that surrounds the polypeptide exit tunnel on the outside of the subunit. In Psychrobacter sp. (strain PRwf-1), this protein is Large ribosomal subunit protein uL24.